The chain runs to 248 residues: Probable transcriptional regulatory protein Mchl_0946 (248 aa).

Belongs to the TACO1 family.

The protein localises to the cytoplasm. This chain is Probable transcriptional regulatory protein Mchl_0946, found in Methylorubrum extorquens (strain CM4 / NCIMB 13688) (Methylobacterium extorquens).